We begin with the raw amino-acid sequence, 387 residues long: 3-ketoacyl-CoA thiolase (387 aa).

The active-site Acyl-thioester intermediate is the C91. Catalysis depends on proton acceptor residues H343 and C373.

It belongs to the thiolase-like superfamily. Thiolase family. Heterotetramer of two alpha chains (FadB) and two beta chains (FadA).

The protein resides in the cytoplasm. The enzyme catalyses an acyl-CoA + acetyl-CoA = a 3-oxoacyl-CoA + CoA. It participates in lipid metabolism; fatty acid beta-oxidation. Catalyzes the final step of fatty acid oxidation in which acetyl-CoA is released and the CoA ester of a fatty acid two carbons shorter is formed. The chain is 3-ketoacyl-CoA thiolase from Escherichia fergusonii (strain ATCC 35469 / DSM 13698 / CCUG 18766 / IAM 14443 / JCM 21226 / LMG 7866 / NBRC 102419 / NCTC 12128 / CDC 0568-73).